Consider the following 739-residue polypeptide: MSGLFGILSPAKRVNGDGLPLFYNIHKSVELQRCHRDTARVSVTLAELLMSVEDEGDDQSRAMDIAVASNFWSSVPSSRVPSSSPFVLSFKDLTYSVKIKKKFKPFPCCGNSPFDGNDMEMNTKVLLNGISGEAREGEMMAVLGASGSGKSTLIDALANRISKESLRGDITLNGEVLESSLHKVISAYVMQDDLLFPMLTVEETLMFSAEFRLPSSLSKKKKKARVQALIDQLGLRNAAKTVIGDEGHRGVSGGERRRVSIGTDIIHDPIILFLDEPTSGLDSTSAYMVVKVLQRIAQSGSIVIMSIHQPSYRILGLLDKLIFLSRGNTVYSGSPTHLPQFFSEFGHPIPENENKPEFALDLIRELEDSPEGTKSLVEFHKQWRAKQTSSQSRRNTNVSLKDAISASISRGKLVSGATNLRSSFQTFANPFWTEMLVIGKRSILNSRRQPELFGIRLGAVLVTGMILATIFWKLDNSPRGIQERLGFFAFAMSTTFYTCAEAIPVFLQERYIFMRETAYNAYRRSSYVLAHTIISIPALIILSAAFAASTFSAVGLAGGSEGFLFFFFTILTAFWAGSSFVTFLSGVVSHVMIGFTVVVAILAYFLLFSGFFISRDRIPLYWIWFHYLSLVKYPYEGVLQNEFEDPTKCFVRGIQMFDNSPLGQVPTAVKISLLKSMSGVLGINVTAETCVTTGIDILKQQGITEISKWNCLWITVAWGFFFRVLFYFTLLIGSKNKRR.

One can recognise an ABC transporter domain in the interval 88–351 (LSFKDLTYSV…FSEFGHPIPE (264 aa)). 144-151 (GASGSGKS) provides a ligand contact to ATP. The region spanning 433-643 (TEMLVIGKRS…PYEGVLQNEF (211 aa)) is the ABC transmembrane type-2 domain. Helical transmembrane passes span 452–472 (LFGI…TIFW), 487–507 (FFAF…PVFL), 528–548 (VLAH…AFAA), 563–583 (FLFF…FVTF), 593–613 (IGFT…GFFI), and 712–732 (LWIT…TLLI).

Belongs to the ABC transporter superfamily. ABCG family. Eye pigment precursor importer (TC 3.A.1.204) subfamily.

The protein localises to the membrane. This chain is ABC transporter G family member 20 (ABCG20), found in Arabidopsis thaliana (Mouse-ear cress).